The following is a 372-amino-acid chain: Carbamoyl phosphate synthase small chain (372 aa).

A CPSase region spans residues 1–184 (MKAYIYLEND…SFQKFNDAKR (184 aa)). Residues S45, G240, and G242 each coordinate L-glutamine. One can recognise a Glutamine amidotransferase type-1 domain in the interval 188–372 (KVAVIDYGVK…YIFKEFMNLM (185 aa)). C268 functions as the Nucleophile in the catalytic mechanism. Residues L269, Q272, N310, and Y313 each coordinate L-glutamine. Active-site residues include H351 and E353.

The protein belongs to the CarA family. In terms of assembly, composed of two chains; the small (or glutamine) chain promotes the hydrolysis of glutamine to ammonia, which is used by the large (or ammonia) chain to synthesize carbamoyl phosphate. Tetramer of heterodimers (alpha,beta)4.

It carries out the reaction hydrogencarbonate + L-glutamine + 2 ATP + H2O = carbamoyl phosphate + L-glutamate + 2 ADP + phosphate + 2 H(+). The enzyme catalyses L-glutamine + H2O = L-glutamate + NH4(+). It functions in the pathway amino-acid biosynthesis; L-arginine biosynthesis; carbamoyl phosphate from bicarbonate: step 1/1. It participates in pyrimidine metabolism; UMP biosynthesis via de novo pathway; (S)-dihydroorotate from bicarbonate: step 1/3. In terms of biological role, small subunit of the glutamine-dependent carbamoyl phosphate synthetase (CPSase). CPSase catalyzes the formation of carbamoyl phosphate from the ammonia moiety of glutamine, carbonate, and phosphate donated by ATP, constituting the first step of 2 biosynthetic pathways, one leading to arginine and/or urea and the other to pyrimidine nucleotides. The small subunit (glutamine amidotransferase) binds and cleaves glutamine to supply the large subunit with the substrate ammonia. The sequence is that of Carbamoyl phosphate synthase small chain from Campylobacter jejuni subsp. jejuni serotype O:2 (strain ATCC 700819 / NCTC 11168).